Here is a 523-residue protein sequence, read N- to C-terminus: Pentatricopeptide repeat-containing protein At3g21470 (523 aa).

13 PPR repeats span residues 10–43, 44–79, 80–114, 115–141, 143–173, 176–210, 211–237, 238–272, 273–307, 308–338, 339–373, 374–408, and 409–439; these read GEFH…RGVY, FPGW…GVCS, DVMV…NVAT, WNAM…ISVC, NTVT…MPFE, NVKA…NAFV, WSLM…VFAR, DLVI…GYEP, DAVT…GIEL, NQFV…ISVR, SVAC…DLKP, DEIT…DVKP, and NVKH…MHVK. The interval 444–523 is type E motif; it reads VLGALLGACK…SPGLSSLVLT (80 aa).

It belongs to the PPR family. PCMP-E subfamily.

This chain is Pentatricopeptide repeat-containing protein At3g21470 (PCMP-E29), found in Arabidopsis thaliana (Mouse-ear cress).